Reading from the N-terminus, the 233-residue chain is 7-cyano-7-deazaguanine synthase (233 aa).

11–21 (FSGGQDSTTCL) contributes to the ATP binding site. Zn(2+) is bound by residues Cys-199, Cys-214, Cys-217, and Cys-220.

The protein belongs to the QueC family. Zn(2+) serves as cofactor.

It catalyses the reaction 7-carboxy-7-deazaguanine + NH4(+) + ATP = 7-cyano-7-deazaguanine + ADP + phosphate + H2O + H(+). Its pathway is purine metabolism; 7-cyano-7-deazaguanine biosynthesis. Its function is as follows. Catalyzes the ATP-dependent conversion of 7-carboxy-7-deazaguanine (CDG) to 7-cyano-7-deazaguanine (preQ(0)). This chain is 7-cyano-7-deazaguanine synthase, found in Herminiimonas arsenicoxydans.